A 439-amino-acid polypeptide reads, in one-letter code: Mitochondrial distribution and morphology protein 12 (439 aa).

Residues 1-439 (MSIDVNWRFA…VYPSFWTFLI (439 aa)) form the SMP-LTD domain. Disordered stretches follow at residues 70 to 103 (YEED…LNEP), 185 to 274 (GWSD…PPRM), and 354 to 386 (PEQQ…RHGG). Basic and acidic residues predominate over residues 78–91 (TSDASEERGEEHSS). The segment covering 215–245 (DTSNSTSRPSTANTLPSHPSGSSKNSGQAAT) has biased composition (polar residues). Composition is skewed to basic and acidic residues over residues 247-261 (RNDH…HLED) and 362-371 (SAGDDHRPQS).

It belongs to the MDM12 family. Component of the ER-mitochondria encounter structure (ERMES) or MDM complex, composed of mmm1, mdm10, mdm12 and mdm34. A mmm1 homodimer associates with one molecule of mdm12 on each side in a pairwise head-to-tail manner, and the SMP-LTD domains of mmm1 and mdm12 generate a continuous hydrophobic tunnel for phospholipid trafficking.

It localises to the mitochondrion outer membrane. Its subcellular location is the endoplasmic reticulum membrane. Component of the ERMES/MDM complex, which serves as a molecular tether to connect the endoplasmic reticulum (ER) and mitochondria. Components of this complex are involved in the control of mitochondrial shape and protein biogenesis, and function in nonvesicular lipid trafficking between the ER and mitochondria. Mdm12 is required for the interaction of the ER-resident membrane protein mmm1 and the outer mitochondrial membrane-resident beta-barrel protein mdm10. The mdm12-mmm1 subcomplex functions in the major beta-barrel assembly pathway that is responsible for biogenesis of all mitochondrial outer membrane beta-barrel proteins, and acts in a late step after the SAM complex. The mdm10-mdm12-mmm1 subcomplex further acts in the TOM40-specific pathway after the action of the mdm12-mmm1 complex. Essential for establishing and maintaining the structure of mitochondria and maintenance of mtDNA nucleoids. The chain is Mitochondrial distribution and morphology protein 12 from Aspergillus fumigatus (strain CBS 144.89 / FGSC A1163 / CEA10) (Neosartorya fumigata).